We begin with the raw amino-acid sequence, 449 residues long: Phosphoglucosamine mutase (449 aa).

Serine 101 serves as the catalytic Phosphoserine intermediate. Mg(2+) is bound by residues serine 101, aspartate 242, aspartate 244, and aspartate 246. Position 101 is a phosphoserine (serine 101).

Belongs to the phosphohexose mutase family. The cofactor is Mg(2+). Activated by phosphorylation.

The enzyme catalyses alpha-D-glucosamine 1-phosphate = D-glucosamine 6-phosphate. Functionally, catalyzes the conversion of glucosamine-6-phosphate to glucosamine-1-phosphate. The protein is Phosphoglucosamine mutase of Hyphomonas neptunium (strain ATCC 15444).